The chain runs to 222 residues: Putative ankyrin repeat protein L36 (222 aa).

ANK repeat units lie at residues 1–14 (MVKYLVAQGVNVDA), 15–44 (QNSRALCLACKYGYINIAYFLMHEGANIYA), 45–74 (NDNHPIRLAAEYGHLSIVKLLIYHNANIRA), 76–104 (EDSALRMAAKRNKLEVVKYIIEKIGTNYE), 105–134 (YSDYPLAYAAGKGHIEMIEYLLSIGEKITD), 136–161 (AMFMAINNGHVGTVKYLIDESQSLPC), and 163–191 (SYSELAKITRKGHLEMIKLLNNRGIKINK).

This is Putative ankyrin repeat protein L36 from Acanthamoeba polyphaga (Amoeba).